A 411-amino-acid polypeptide reads, in one-letter code: Coiled-coil domain-containing protein 159 (411 aa).

Residues 84–113 are disordered; the sequence is EQAGKSGAWEKEWDSEPQPHEGTPCSSSDV. The span at 91-102 shows a compositional bias: basic and acidic residues; it reads AWEKEWDSEPQP. A coiled-coil region spans residues 269 to 305; the sequence is EELELVREEVTFIYQKLQDQEDEISENLLNIQKMQKT. Positions 372-411 are disordered; that stretch reads RASSLRGQKGHQCKSSQCPSWDSDSDWERPFSKSGSYPPA. Positions 384 to 393 are enriched in polar residues; it reads CKSSQCPSWD.

As to quaternary structure, interacts with DYNLT2. Interacts with GGNBP1. Interacts with OSBP2. As to expression, expressed in spermatids but undetectable in the spermatozoon (at protein level). Highly expressed in the testis (at protein level).

Functions during spermatid development; may participate in the centrosome reduction procedure of spermatids and is required for the formation of the connecting piece/sperm head-tail coupling apparatus (HTCA) and the correct and tight attachment of the flagellum to the nuclear envelope. The chain is Coiled-coil domain-containing protein 159 (Ccdc159) from Mus musculus (Mouse).